A 353-amino-acid chain; its full sequence is Protein RecA (353 aa).

ATP is bound at residue 75–82 (GPESSGKT).

This sequence belongs to the RecA family.

The protein resides in the cytoplasm. Its function is as follows. Can catalyze the hydrolysis of ATP in the presence of single-stranded DNA, the ATP-dependent uptake of single-stranded DNA by duplex DNA, and the ATP-dependent hybridization of homologous single-stranded DNAs. It interacts with LexA causing its activation and leading to its autocatalytic cleavage. In Cupriavidus pinatubonensis (strain JMP 134 / LMG 1197) (Cupriavidus necator (strain JMP 134)), this protein is Protein RecA.